A 293-amino-acid chain; its full sequence is Triosephosphate isomerase (293 aa).

Position 25–27 (25–27 (NWK)) interacts with substrate. Histidine 117 serves as the catalytic Electrophile. The Proton acceptor role is filled by glutamate 218.

This sequence belongs to the triosephosphate isomerase family. Homodimer.

The protein resides in the cytoplasm. It carries out the reaction D-glyceraldehyde 3-phosphate = dihydroxyacetone phosphate. It functions in the pathway carbohydrate biosynthesis; gluconeogenesis. The protein operates within carbohydrate degradation; glycolysis; D-glyceraldehyde 3-phosphate from glycerone phosphate: step 1/1. Functionally, involved in the gluconeogenesis. Catalyzes stereospecifically the conversion of dihydroxyacetone phosphate (DHAP) to D-glyceraldehyde-3-phosphate (G3P). This chain is Triosephosphate isomerase, found in Tropheryma whipplei (strain TW08/27) (Whipple's bacillus).